Consider the following 279-residue polypeptide: Diaminopimelate epimerase (279 aa).

Asn13, Gln46, and Asn66 together coordinate substrate. Cys75 acts as the Proton donor in catalysis. Substrate is bound by residues Gly76–Asn77, Asn161, Asn194, and Glu212–Arg213. The active-site Proton acceptor is the Cys221. Substrate is bound at residue Gly222 to Thr223.

The protein belongs to the diaminopimelate epimerase family. Homodimer.

The protein localises to the cytoplasm. The catalysed reaction is (2S,6S)-2,6-diaminopimelate = meso-2,6-diaminopimelate. Its pathway is amino-acid biosynthesis; L-lysine biosynthesis via DAP pathway; DL-2,6-diaminopimelate from LL-2,6-diaminopimelate: step 1/1. Its function is as follows. Catalyzes the stereoinversion of LL-2,6-diaminopimelate (L,L-DAP) to meso-diaminopimelate (meso-DAP), a precursor of L-lysine and an essential component of the bacterial peptidoglycan. The sequence is that of Diaminopimelate epimerase from Alkalilimnicola ehrlichii (strain ATCC BAA-1101 / DSM 17681 / MLHE-1).